The primary structure comprises 103 residues: Carboxysome shell protein CsoS1 (103 aa).

A BMC domain is found at 9–94; that stretch reads ALGMIETRGL…PHREVEPALG (86 aa).

The protein belongs to the bacterial microcompartments protein family. CsoS1 subfamily. In terms of assembly, homohexamer with a small central pore. Forms a CsoS2-CsoS1-RuBisCO complex.

It is found in the carboxysome. Functionally, one of the shell proteins of the carboxysome, a polyhedral inclusion where RuBisCO (ribulose bisphosphate carboxylase, ccbL-ccbS) is sequestered. Assembles into hexamers which make sheets that form the facets of the polyhedral carboxysome. This chain is Carboxysome shell protein CsoS1, found in Prochlorococcus marinus (strain MIT 9313).